Consider the following 1323-residue polypeptide: Regulatory protein ADR1 (1323 aa).

Serine 54 is modified (phosphoserine). 2 consecutive C2H2-type zinc fingers follow at residues 104-126 (FVCE…YRSH) and 132-155 (YPCG…QKIH). Residues 175 to 216 (KARKNSASSVKFQTPTYGTPDNGNFLNRTTANTRRKASPEAN) form a disordered region. The span at 179–206 (NSASSVKFQTPTYGTPDNGNFLNRTTAN) shows a compositional bias: polar residues. Phosphothreonine is present on residues threonine 188 and threonine 193. Phosphoserine; by PKA; in vitro is present on serine 230. Serine 258 carries the phosphoserine modification. Residue threonine 259 is modified to Phosphothreonine. 3 positions are modified to phosphoserine: serine 299, serine 323, and serine 325. Residue threonine 327 is modified to Phosphothreonine.

Post-translationally, phosphorylation at Ser-230 by cAMP-dependent protein kinase A does not affect DNA binding but appears to prevent transcription of ADH2 during glucose repression.

Its subcellular location is the nucleus. Its function is as follows. Required for transcriptional activation of glucose-repressible alcohol dehydrogenase (ADH2). This is Regulatory protein ADR1 (ADR1) from Saccharomyces cerevisiae (strain ATCC 204508 / S288c) (Baker's yeast).